We begin with the raw amino-acid sequence, 345 residues long: Mannonate dehydratase 2 (345 aa).

Belongs to the mannonate dehydratase family. Requires Fe(2+) as cofactor. Mn(2+) serves as cofactor.

The catalysed reaction is D-mannonate = 2-dehydro-3-deoxy-D-gluconate + H2O. It participates in carbohydrate metabolism; pentose and glucuronate interconversion. Catalyzes the dehydration of D-mannonate. This chain is Mannonate dehydratase 2 (uxuA2), found in Halalkalibacterium halodurans (strain ATCC BAA-125 / DSM 18197 / FERM 7344 / JCM 9153 / C-125) (Bacillus halodurans).